The chain runs to 670 residues: Solute carrier organic anion transporter family member 1A2 (670 aa).

The Cytoplasmic portion of the chain corresponds to 1-20; it reads MGETEKRIETHRIRCLSKLK. Residues 21-40 form a helical membrane-spanning segment; the sequence is MFLLAITCAFVSKTLSGSYM. Topologically, residues 41 to 59 are extracellular; the sequence is NSMLTQIERQFNIPTSLVG. Residues 60-80 form a helical membrane-spanning segment; the sequence is FINGSFEIGNLLLIIFVSYFG. Residues 81 to 86 lie on the Cytoplasmic side of the membrane; that stretch reads TKLHRP. Residues 87–111 form a helical membrane-spanning segment; that stretch reads IMIGIGCVVMGLGCFLKSLPHFLMN. Over 112 to 155 the chain is Extracellular; that stretch reads QYEYESTVSVSGNLSSNSFLCMENGTQILRPTQDPSECTKEVKS. Asparagine 124 and asparagine 135 each carry an N-linked (GlcNAc...) asparagine glycan. Residues 156 to 184 traverse the membrane as a helical segment; sequence LMWVYVLVGNIVRGMGETPILPLGISYIE. The Cytoplasmic segment spans residues 185–203; the sequence is DFAKFENSPLYIGLVETGA. The helical transmembrane segment at 204–224 threads the bilayer; sequence IIGPLIGLLLASFCANVYVDT. Topologically, residues 225–242 are extracellular; it reads GFVNTDDLIITPTDTRWV. The chain crosses the membrane as a helical span at residues 243-267; sequence GAWWFGFLICAGVNVLTAIPFFFLP. At 268 to 311 the chain is on the cytoplasmic side; the sequence is NTLPKEGLETNADIIKNENEDKQKEEVKKEKYGITKDFLPFMKS. Residues 312–333 traverse the membrane as a helical segment; sequence LSCNPIYMLFILVSVIQFNAFV. The Extracellular portion of the chain corresponds to 334–353; the sequence is NMISFMPKYLEQQYGISSSD. Residues 354–377 form a helical membrane-spanning segment; the sequence is AIFLMGIYNLPPICIGYIIGGLIM. The Cytoplasmic segment spans residues 378–381; that stretch reads KKFK. Residues 382-405 form a helical membrane-spanning segment; sequence ITVKQAAHIGCWLSLLEYLLYFLS. The Extracellular segment spans residues 406–513; it reads FLMTCENSSV…PDCSLMLQYF (108 aa). Residues asparagine 412 and asparagine 419 are each glycosylated (N-linked (GlcNAc...) asparagine). The 56-residue stretch at 433 to 488 folds into the Kazal-like domain; sequence NDIFADCNVDCNCPSKIWDPVCGNNGLSYLSACLAGCETSIGTGINMVFQNCSCIQ. Disulfide bonds link cysteine 439–cysteine 469, cysteine 445–cysteine 465, and cysteine 454–cysteine 486. The chain crosses the membrane as a helical span at residues 514–536; sequence LILSAMSSFIYSLAAIPGYMVLL. Residues 537–545 are Cytoplasmic-facing; it reads RCMKSEEKS. Residues 546-571 traverse the membrane as a helical segment; the sequence is LGVGLHTFCTRVFAGIPAPIYFGALM. The Extracellular segment spans residues 572-605; it reads DSTCLHWGTLKCGESGACRIYDSTTFRYIYLGLP. Residues 606–623 form a helical membrane-spanning segment; sequence AALRGSSFVPALIILILL. Residues 624-670 are Cytoplasmic-facing; the sequence is RKCHLPGENASSGTELIETKVKGKENECKDIYQKSTVLKDDELKTKL.

Belongs to the organo anion transporter (TC 2.A.60) family. As to expression, higher expression in the brain than in liver and kidney. Expressed in brain neurons in both cortex and hippocampus. Expressed in placental trophoblasts. Also expressed in lung and testes at lower levels. Expressed in the eye (at protein level). Expressed in the retina in the outer and inner nuclear layers, the inner plexiform layer and the ganglion cell layer. Expressed in liver and prostate. In testis, primarily localized to the basal membrane of Sertoli cells and weakly expressed in Leydig cells and within the tubules. Expressed in fetal brain and liver.

The protein resides in the cell membrane. The protein localises to the basal cell membrane. The enzyme catalyses taurocholate(out) = taurocholate(in). It carries out the reaction glycocholate(out) = glycocholate(in). The catalysed reaction is taurochenodeoxycholate(out) = taurochenodeoxycholate(in). It catalyses the reaction tauroursodeoxycholate(out) = tauroursodeoxycholate(in). The enzyme catalyses dehydroepiandrosterone 3-sulfate(out) = dehydroepiandrosterone 3-sulfate(in). It carries out the reaction estrone 3-sulfate(out) = estrone 3-sulfate(in). The catalysed reaction is 3,3',5'-triiodo-L-thyronine(out) = 3,3',5'-triiodo-L-thyronine(in). It catalyses the reaction L-thyroxine(out) = L-thyroxine(in). The enzyme catalyses taurodeoxycholate(out) = taurodeoxycholate(in). It carries out the reaction glycodeoxycholate(out) = glycodeoxycholate(in). The catalysed reaction is glycochenodeoxycholate(out) = glycochenodeoxycholate(in). It catalyses the reaction glycoursodeoxycholate(out) = glycoursodeoxycholate(in). The enzyme catalyses 17beta-estradiol 17-O-(beta-D-glucuronate)(out) = 17beta-estradiol 17-O-(beta-D-glucuronate)(in). It carries out the reaction prostaglandin E2(out) = prostaglandin E2(in). The catalysed reaction is substance P(out) = substance P(in). Its activity is regulated as follows. Transport activity is inhibited by the grapefruit juice component naringin. Na(+)-independent transporter that mediates the cellular uptake of a broad range of organic anions such as the endogenous bile salts cholate and deoxycholate, either in their unconjugated or conjugated forms (taurocholate and glycocholate), at the plasmam membrane. Responsible for intestinal absorption of bile acids. Transports dehydroepiandrosterone 3-sulfate (DHEAS), a major circulating steroid secreted by the adrenal cortex, as well as estrone 3-sulfate and 17beta-estradiol 17-O-(beta-D-glucuronate). Mediates apical uptake of all-trans-retinol (atROL) across human retinal pigment epithelium, which is essential to maintaining the integrity of the visual cycle and thus vision. Involved in the uptake of clinically used drugs. Capable of thyroid hormone transport (both T3 or 3,3',5'-triiodo-L-thyronine, and T4 or L-tyroxine). Also transports prostaglandin E2. Plays roles in blood-brain and -cerebrospinal fluid barrier transport of organic anions and signal mediators, and in hormone uptake by neural cells. May also play a role in the reuptake of neuropeptides such as substance P/TAC1 and vasoactive intestinal peptide/VIP released from retinal neurons. May play an important role in plasma and tissue distribution of the structurally diverse chemotherapeutic drugs methotrexate and paclitaxel. Shows a pH-sensitive substrate specificity which may be ascribed to the protonation state of the binding site and leads to a stimulation of substrate transport in an acidic microenvironment. Hydrogencarbonate/HCO3(-) acts as the probable counteranion that exchanges for organic anions. May contribute to regulate the transport of organic compounds in testis across the blood-testis-barrier. The protein is Solute carrier organic anion transporter family member 1A2 (SLCO1A2) of Homo sapiens (Human).